Reading from the N-terminus, the 229-residue chain is UPF0173 metal-dependent hydrolase SERP1270 (229 aa).

This sequence belongs to the UPF0173 family.

The polypeptide is UPF0173 metal-dependent hydrolase SERP1270 (Staphylococcus epidermidis (strain ATCC 35984 / DSM 28319 / BCRC 17069 / CCUG 31568 / BM 3577 / RP62A)).